Consider the following 440-residue polypeptide: 3-phosphoshikimate 1-carboxyvinyltransferase (440 aa).

3-phosphoshikimate-binding residues include lysine 25, serine 26, and arginine 30. Lysine 25 is a binding site for phosphoenolpyruvate. Glycine 96 and arginine 124 together coordinate phosphoenolpyruvate. Residues serine 168, glutamine 169, aspartate 310, and lysine 337 each coordinate 3-phosphoshikimate. A phosphoenolpyruvate-binding site is contributed by glutamine 169. Aspartate 310 acts as the Proton acceptor in catalysis. Arginine 341, arginine 382, and lysine 409 together coordinate phosphoenolpyruvate.

The protein belongs to the EPSP synthase family. Monomer.

It localises to the cytoplasm. It catalyses the reaction 3-phosphoshikimate + phosphoenolpyruvate = 5-O-(1-carboxyvinyl)-3-phosphoshikimate + phosphate. The protein operates within metabolic intermediate biosynthesis; chorismate biosynthesis; chorismate from D-erythrose 4-phosphate and phosphoenolpyruvate: step 6/7. Its function is as follows. Catalyzes the transfer of the enolpyruvyl moiety of phosphoenolpyruvate (PEP) to the 5-hydroxyl of shikimate-3-phosphate (S3P) to produce enolpyruvyl shikimate-3-phosphate and inorganic phosphate. This is 3-phosphoshikimate 1-carboxyvinyltransferase from Chlamydia trachomatis serovar A (strain ATCC VR-571B / DSM 19440 / HAR-13).